We begin with the raw amino-acid sequence, 486 residues long: Bifunctional protein HldE (486 aa).

The segment at 1 to 329 is ribokinase; that stretch reads MSSRLSGLLD…AALSVAGPVG (329 aa). 204 to 207 contributes to the ATP binding site; it reads NAFE. Asp-274 is an active-site residue. Residues 355-486 form a cytidylyltransferase region; it reads FTNGCFDILH…AIIARSETGK (132 aa).

It in the N-terminal section; belongs to the carbohydrate kinase PfkB family. This sequence in the C-terminal section; belongs to the cytidylyltransferase family. As to quaternary structure, homodimer.

It catalyses the reaction D-glycero-beta-D-manno-heptose 7-phosphate + ATP = D-glycero-beta-D-manno-heptose 1,7-bisphosphate + ADP + H(+). It carries out the reaction D-glycero-beta-D-manno-heptose 1-phosphate + ATP + H(+) = ADP-D-glycero-beta-D-manno-heptose + diphosphate. Its pathway is nucleotide-sugar biosynthesis; ADP-L-glycero-beta-D-manno-heptose biosynthesis; ADP-L-glycero-beta-D-manno-heptose from D-glycero-beta-D-manno-heptose 7-phosphate: step 1/4. It participates in nucleotide-sugar biosynthesis; ADP-L-glycero-beta-D-manno-heptose biosynthesis; ADP-L-glycero-beta-D-manno-heptose from D-glycero-beta-D-manno-heptose 7-phosphate: step 3/4. Functionally, catalyzes the phosphorylation of D-glycero-D-manno-heptose 7-phosphate at the C-1 position to selectively form D-glycero-beta-D-manno-heptose-1,7-bisphosphate. Catalyzes the ADP transfer from ATP to D-glycero-beta-D-manno-heptose 1-phosphate, yielding ADP-D-glycero-beta-D-manno-heptose. The polypeptide is Bifunctional protein HldE (Hyphomonas neptunium (strain ATCC 15444)).